The chain runs to 336 residues: Iron-uptake system permease protein FeuC (336 aa).

The next 9 membrane-spanning stretches (helical) occupy residues 7-27 (LFIA…SFSV), 57-77 (VVMA…IQAI), 85-105 (PGIL…MLLF), 120-140 (MPLF…IFAW), 150-170 (IILV…FLSL), 191-211 (ANWT…PILI), 246-266 (VAII…GLIA), 280-300 (YILP…DFAG), and 308-328 (EVPA…YLLF).

It belongs to the binding-protein-dependent transport system permease family. FecCD subfamily. As to quaternary structure, the complex is composed of one ATP-binding protein (YusV), two transmembrane proteins (FeuB and FeuC) and a solute-binding protein (FeuA).

The protein localises to the cell membrane. Involved in the uptake of iron. Probably responsible for the translocation of the substrate across the membrane. Functionally, part of the ABC transporter complex FeuABC/YusV involved in import of the catecholate siderophores bacillibactin and enterobactin. The polypeptide is Iron-uptake system permease protein FeuC (feuC) (Bacillus subtilis (strain 168)).